The chain runs to 637 residues: MYHISAEDIYLFHQGTNFESHQFLGCHEINWKGKRGYRFAVWAPNALKVCVVGDFNNWEENSHPLEKFTDEGLWGGFIADIPPATSYKYHICSSEDTSILKADPFATQAERRPKTASVIPAANGYQWSDDQWIEQRNTYDPYSSPISIYEVHLGTWKKTLKKQFLSYRELATQLIPYVKSLGYTHIELLPINEHPFDRSWGYQITGYFAVTSRYGNPSDFKYFIDQCHQHQIGVILDWVPGHFCKDDFGLRQFDGAPLYEYRDPKKSEKKSWGTLAFDYGRPEVQSFLISNAIYWLKEFHIDGLRVDAVASMLYLNFDRYDEEEKIYNTYGGEENLEAFAFLRKLNKVVFSYIPGALMMAEDSSDLPLVTAPVNKGGLGFNYKWNMGWMNDLLSFMEKESIHRKWHHNRLTFSFMYTYSENYLLPLSHDEVVHGKKSLLDKMPGDQWQQFANLRLLYGYMYTHPGKKLVFMGGELAQYAEWKDTEELDWHLLEYPLHKGIYHYIKNLNELYQQHPELYELDHLSEGFEWIDPHNIDQSVIAFRRKANKPNQELIIICNFTPQVHFDYKIGVPESGRYKEIFNSDSVRFGGSGQINEGEHFSFPEKWHGLSQHIKIKVPPLAISVFQIEVERERLPRE.

The Nucleophile role is filled by D307. E361 serves as the catalytic Proton donor.

This sequence belongs to the glycosyl hydrolase 13 family. GlgB subfamily. Monomer.

It catalyses the reaction Transfers a segment of a (1-&gt;4)-alpha-D-glucan chain to a primary hydroxy group in a similar glucan chain.. It functions in the pathway glycan biosynthesis; glycogen biosynthesis. Functionally, catalyzes the formation of the alpha-1,6-glucosidic linkages in glycogen by scission of a 1,4-alpha-linked oligosaccharide from growing alpha-1,4-glucan chains and the subsequent attachment of the oligosaccharide to the alpha-1,6 position. This Oceanobacillus iheyensis (strain DSM 14371 / CIP 107618 / JCM 11309 / KCTC 3954 / HTE831) protein is 1,4-alpha-glucan branching enzyme GlgB.